The sequence spans 293 residues: Oxidoreductase R2 (293 aa).

Belongs to the asaB hydroxylase/desaturase family.

It participates in secondary metabolite biosynthesis. Its function is as follows. Oxidoreductase; part of the gene cluster that mediates the biosynthesis of squalestatin S1 (SQS1, also known as zaragozic acid A), a heavily oxidized fungal polyketide that offers potent cholesterol lowering activity by targeting squalene synthase (SS). SQS1 is composed of a 2,8-dioxobicyclic[3.2.1]octane-3,4,5-tricarboxyclic acid core that is connected to two lipophilic polyketide arms. These initial steps feature the priming of an unusual benzoic acid starter unit onto the highly reducing polyketide synthase pks2, followed by oxaloacetate extension and product release to generate a tricarboxylic acid containing product. The phenylalanine ammonia lyase (PAL) M7 and the acyl-CoA ligase M9 are involved in transforming phenylalanine into benzoyl-CoA. The citrate synthase-like protein R3 is involved in connecting the C-alpha-carbons of the hexaketide chain and oxaloacetate to afford the tricarboxylic acid unit. The potential hydrolytic enzymes, M8 and M10, are in close proximity to pks2 and may participate in product release. On the other side, the tetraketide arm is synthesized by a the squalestatin tetraketide synthase pks1 and enzymatically esterified to the core in the last biosynthetic step, by the acetyltransferase M4. The biosynthesis of the tetraketide must involve 3 rounds of chain extension. After the first and second rounds methyl-transfer occurs, and in all rounds of extension the ketoreductase and dehydratase are active. The enoyl reductase and C-MeT of pks1 are not active in the final round of extension. The acetyltransferase M4 appears to have a broad substrate selectivity for its acyl CoA substrate, allowing the in vitro synthesis of novel squalestatins. The biosynthesis of SQS1 requires several oxidative steps likely performed by oxidoreductases M1, R1 and R2. Finally, in support of the identification of the cluster as being responsible for SQS1 production, the cluster contains a gene encoding a putative squalene synthase (SS) R6, suggesting a likely mechanism for self-resistance. The protein is Oxidoreductase R2 of Phoma sp. (strain ATCC 20986 / MF5453).